Consider the following 63-residue polypeptide: Beta-defensin 3 (63 aa).

Residues Met1 to Ala20 form the signal peptide. Residues Phe21–Ser22 constitute a propeptide that is removed on maturation. Disulfide bonds link Cys31–Cys59, Cys38–Cys52, and Cys42–Cys60.

The protein belongs to the beta-defensin family.

The protein resides in the secreted. Functionally, has bactericidal activity. The polypeptide is Beta-defensin 3 (Defb3) (Rattus norvegicus (Rat)).